The sequence spans 571 residues: Wee1-like protein kinase 1-A (571 aa).

The tract at residues 1–101 (MSLQPVPHRL…PDCPGTPPHK (101 aa)) is disordered. Pro residues predominate over residues 81-98 (PASPPGPAASPPDCPGTP). The Protein kinase domain maps to 224–494 (FHELEKIGSG…SMALVKHSVL (271 aa)). Residues 230 to 238 (IGSGEFGSV) and lysine 253 contribute to the ATP site. Catalysis depends on aspartate 351, which acts as the Proton acceptor. Asparagine 356 and aspartate 388 together coordinate Mg(2+). Residues 500–539 (KNAEQLRIELNAEKFKNALLQKELKKAQIAKAAAEERALF) are a coiled coil.

The protein belongs to the protein kinase superfamily. Ser/Thr protein kinase family. WEE1 subfamily. Zygotically expressed. Expressed in regions of the embryo that are devoid of mitotic cells, such as the involuting mesoderm.

It is found in the nucleus. The enzyme catalyses L-tyrosyl-[protein] + ATP = O-phospho-L-tyrosyl-[protein] + ADP + H(+). Its function is as follows. Acts as a zygotic negative regulator of entry into mitosis (G2 to M transition) by protecting the nucleus from cytoplasmically activated cyclin B1-complexed cdk1 before the onset of mitosis by mediating phosphorylation of cdk1 on 'Tyr-15'. Specifically phosphorylates and inactivates cyclin B1-complexed cdk1 reaching a maximum during G2 phase and a minimum as cells enter M phase. Phosphorylation of cyclin B1-cdk1 occurs exclusively on 'Tyr-15' and phosphorylation of monomeric cdk1 does not occur. Involved in convergent extension of the paraxial mesoderm during neurulation by inhibiting the cell cycle. This is Wee1-like protein kinase 1-A (wee1-a) from Xenopus laevis (African clawed frog).